Reading from the N-terminus, the 299-residue chain is Probable lipid kinase YegS (299 aa).

Residues 2–133 (AEFPASLLIL…IDMAQVNKQT (132 aa)) form the DAGKc domain. ATP-binding positions include Thr-40, 66-72 (GDGTINE), and Thr-95. Mg(2+) contacts are provided by Leu-215, Asp-218, and Leu-220. Glu-271 functions as the Proton acceptor in the catalytic mechanism.

It belongs to the diacylglycerol/lipid kinase family. YegS lipid kinase subfamily. Mg(2+) serves as cofactor. It depends on Ca(2+) as a cofactor.

The protein localises to the cytoplasm. In terms of biological role, probably phosphorylates lipids; the in vivo substrate is unknown. The chain is Probable lipid kinase YegS from Shigella boydii serotype 18 (strain CDC 3083-94 / BS512).